Here is a 191-residue protein sequence, read N- to C-terminus: Probable GTP-binding protein EngB (191 aa).

The EngB-type G domain occupies 22 to 190; that stretch reads RLPEIAFLGR…WQAITTTLQA (169 aa). Residues 30 to 37, 57 to 61, 75 to 78, 142 to 145, and 169 to 171 each bind GTP; these read GRSNVGKS, GRTQT, DLPG, TKTD, and FSA. Mg(2+)-binding residues include serine 37 and threonine 59.

It belongs to the TRAFAC class TrmE-Era-EngA-EngB-Septin-like GTPase superfamily. EngB GTPase family. Mg(2+) serves as cofactor.

Its function is as follows. Necessary for normal cell division and for the maintenance of normal septation. The protein is Probable GTP-binding protein EngB of Solibacter usitatus (strain Ellin6076).